Consider the following 390-residue polypeptide: Terminal nucleotidyltransferase 5C (390 aa).

This sequence belongs to the TENT family.

It is found in the nucleus. The protein resides in the cytoplasm. The protein localises to the cytoskeleton. Its subcellular location is the microtubule organizing center. It localises to the centrosome. The enzyme catalyses RNA(n) + ATP = RNA(n)-3'-adenine ribonucleotide + diphosphate. Catalyzes the transfer of one adenosine molecule from an ATP to an mRNA poly(A) tail bearing a 3'-OH terminal group and enhances mRNA stability and gene expression. This chain is Terminal nucleotidyltransferase 5C, found in Gallus gallus (Chicken).